The chain runs to 133 residues: Transmembrane protein 60 (133 aa).

Transmembrane regions (helical) follow at residues 5–25 (LAQR…MLVL), 35–55 (WFLI…LLIV), 78–98 (AWYL…CAKL), and 110–130 (FIPL…NVFF).

The protein localises to the membrane. The chain is Transmembrane protein 60 (TMEM60) from Homo sapiens (Human).